Consider the following 207-residue polypeptide: Small ribosomal subunit protein uS4 (207 aa).

Positions 96 to 156 constitute an S4 RNA-binding domain; it reads SRLDNVVYRM…KKSHNQSRIY (61 aa).

The protein belongs to the universal ribosomal protein uS4 family. As to quaternary structure, part of the 30S ribosomal subunit. Contacts protein S5. The interaction surface between S4 and S5 is involved in control of translational fidelity.

One of the primary rRNA binding proteins, it binds directly to 16S rRNA where it nucleates assembly of the body of the 30S subunit. Functionally, with S5 and S12 plays an important role in translational accuracy. The protein is Small ribosomal subunit protein uS4 of Blochmanniella floridana.